Reading from the N-terminus, the 315-residue chain is Nucleotide-binding protein CGSHiEE_06315 (315 aa).

8 to 15 is a binding site for ATP; the sequence is GRSGAGKS. GTP is bound at residue 56–59; the sequence is DIRN.

It belongs to the RapZ-like family.

In terms of biological role, displays ATPase and GTPase activities. In Haemophilus influenzae (strain PittEE), this protein is Nucleotide-binding protein CGSHiEE_06315.